We begin with the raw amino-acid sequence, 465 residues long: Probable spore coat protein DDB_G0283555 (465 aa).

The first 22 residues, 1 to 22, serve as a signal peptide directing secretion; it reads MRINNLLVCLVLVFSTLSISNA. The 119-residue stretch at 35 to 153 folds into the DSCP-N domain; sequence RNCDSLSEDQ…RYPVCKGGGG (119 aa). 7 Follistatin-like domains span residues 160 to 182, 195 to 217, 229 to 251, 257 to 280, 287 to 309, 318 to 340, and 435 to 458; these read PCKN…AYCV, LCKA…ACCV, LCDA…ANCV, ECEH…PHCQ, LCRN…PTCI, PCRD…PSCV, and LCEF…PVCL.

May contribute to the structure of the coat at the interface between the middle, cellulosic layer and the outer, electron-dense, proteinaceous layer. The polypeptide is Probable spore coat protein DDB_G0283555 (Dictyostelium discoideum (Social amoeba)).